Consider the following 279-residue polypeptide: Orotidine 5'-phosphate decarboxylase (279 aa).

Substrate is bound by residues Asp8, Lys30, 58–67 (DLKFHDIPNT), Thr117, Arg177, Gln186, Gly206, and Arg207. The Proton donor role is filled by Lys60.

Belongs to the OMP decarboxylase family. Type 1 subfamily. As to quaternary structure, homodimer.

The enzyme catalyses orotidine 5'-phosphate + H(+) = UMP + CO2. Its pathway is pyrimidine metabolism; UMP biosynthesis via de novo pathway; UMP from orotate: step 2/2. Its function is as follows. Catalyzes the decarboxylation of orotidine 5'-monophosphate (OMP) to uridine 5'-monophosphate (UMP). This chain is Orotidine 5'-phosphate decarboxylase, found in Campylobacter jejuni subsp. jejuni serotype O:2 (strain ATCC 700819 / NCTC 11168).